We begin with the raw amino-acid sequence, 630 residues long: DNA mismatch repair protein MutL (630 aa).

Residues 398–408 (TQTNAFGSMAT) show a composition bias toward polar residues. The disordered stretch occupies residues 398 to 425 (TQTNAFGSMATSRDSSRGSYSASESRQR).

The protein belongs to the DNA mismatch repair MutL/HexB family.

Its function is as follows. This protein is involved in the repair of mismatches in DNA. It is required for dam-dependent methyl-directed DNA mismatch repair. May act as a 'molecular matchmaker', a protein that promotes the formation of a stable complex between two or more DNA-binding proteins in an ATP-dependent manner without itself being part of a final effector complex. The protein is DNA mismatch repair protein MutL of Shewanella baltica (strain OS185).